The sequence spans 338 residues: Lipoyl synthase (338 aa).

Residues 1 to 24 are disordered; the sequence is MTTVQEAVPNLIPTQDATPRPAPK. Residues cysteine 84, cysteine 89, cysteine 95, cysteine 110, cysteine 114, cysteine 117, and serine 324 each coordinate [4Fe-4S] cluster. The 218-residue stretch at 96–313 folds into the Radical SAM core domain; sequence FSGGTATFMI…AEEGYKMGFK (218 aa).

It belongs to the radical SAM superfamily. Lipoyl synthase family. It depends on [4Fe-4S] cluster as a cofactor.

Its subcellular location is the cytoplasm. The catalysed reaction is [[Fe-S] cluster scaffold protein carrying a second [4Fe-4S](2+) cluster] + N(6)-octanoyl-L-lysyl-[protein] + 2 oxidized [2Fe-2S]-[ferredoxin] + 2 S-adenosyl-L-methionine + 4 H(+) = [[Fe-S] cluster scaffold protein] + N(6)-[(R)-dihydrolipoyl]-L-lysyl-[protein] + 4 Fe(3+) + 2 hydrogen sulfide + 2 5'-deoxyadenosine + 2 L-methionine + 2 reduced [2Fe-2S]-[ferredoxin]. Its pathway is protein modification; protein lipoylation via endogenous pathway; protein N(6)-(lipoyl)lysine from octanoyl-[acyl-carrier-protein]: step 2/2. In terms of biological role, catalyzes the radical-mediated insertion of two sulfur atoms into the C-6 and C-8 positions of the octanoyl moiety bound to the lipoyl domains of lipoate-dependent enzymes, thereby converting the octanoylated domains into lipoylated derivatives. This chain is Lipoyl synthase, found in Pseudomonas putida (strain W619).